A 1491-amino-acid chain; its full sequence is Neurexin-1a (1491 aa).

The N-terminal stretch at 1 to 27 (MSFSMRNGAHLIWIGLLVCCLVDMGAS) is a signal peptide. The Laminin G-like 1 domain maps to 28-208 (MEFTGAEGQW…SDICEADHIC (181 aa)). The Extracellular segment spans residues 28-1415 (MEFTGAEGQW…EVIRESSSTT (1388 aa)). Residues 198-236 (NSDICEADHICLNGGVCSIVNDEPICDCSETGFQGKDCS) enclose the EGF-like 1 domain. Intrachain disulfides connect cysteine 202-cysteine 214, cysteine 208-cysteine 223, and cysteine 225-cysteine 235. 2 Laminin G-like domains span residues 263–460 (MATF…AFKC) and 467–661 (DPVT…KPSC). Ca(2+) contacts are provided by aspartate 309, leucine 326, and methionine 394. Intrachain disulfides connect cysteine 424–cysteine 460, cysteine 632–cysteine 661, cysteine 669–cysteine 680, cysteine 674–cysteine 689, and cysteine 691–cysteine 701. The EGF-like 2 domain maps to 665–702 (PPKQCLSNPCLNSGTCREGWNRYVCDCSGTGYLGRSCE). Laminin G-like domains follow at residues 707–880 (ILSY…IDYC) and 894–1069 (DPVT…ERGC). 4 disulfide bridges follow: cysteine 1041–cysteine 1069, cysteine 1076–cysteine 1087, cysteine 1081–cysteine 1096, and cysteine 1098–cysteine 1108. Positions 1072–1109 (PSTTCQEDSCSNQGVCLQQWEGFSCDCSMTSYGGPLCN) constitute an EGF-like 3 domain. In terms of domain architecture, Laminin G-like 6 spans 1113-1314 (TTYIFGRDGG…DPNVRVEGSA (202 aa)). The disordered stretch occupies residues 1318 to 1408 (GDMPSSSITP…AKGYPSPEVI (91 aa)). Low complexity predominate over residues 1322–1353 (SSSITPQSSVSAAGNRSETSPSITDITTTTAS). Over residues 1354–1364 (NRQGKQTTTPQ) the composition is skewed to polar residues. Residues 1416-1436 (GMVVGIVAAAALCILILLYAM) form a helical membrane-spanning segment. Residues 1437–1491 (YKYRNRDEGSYHVDESRNYISNSATQPNGAAVKEKPIGVPKNKKDKKNKDKEYYV) are Cytoplasmic-facing. The segment at 1457-1491 (SNSATQPNGAAVKEKPIGVPKNKKDKKNKDKEYYV) is disordered.

Belongs to the neurexin family.

It localises to the membrane. In terms of biological role, neuronal cell surface protein that may be involved in cell recognition and cell adhesion. This chain is Neurexin-1a (nrxn1a), found in Danio rerio (Zebrafish).